Consider the following 168-residue polypeptide: Cysteine-rich perinuclear theca protein 1 (168 aa).

The tract at residues 144–168 (NVSDPEEVPPCLDSDPFPNGDLASS) is disordered.

In terms of tissue distribution, specifically expressed in spermatozoa (at protein level). Detected from the elongated spermatid stage onwards; not found in immature germ cells or somatic cells (at protein level).

It is found in the cytoplasm. Its subcellular location is the cytoskeleton. The protein resides in the perinuclear theca. The sequence is that of Cysteine-rich perinuclear theca protein 1 from Mus musculus (Mouse).